A 245-amino-acid chain; its full sequence is 1-(5-phosphoribosyl)-5-[(5-phosphoribosylamino)methylideneamino] imidazole-4-carboxamide isomerase (245 aa).

The active-site Proton acceptor is aspartate 12. Aspartate 131 acts as the Proton donor in catalysis.

Belongs to the HisA/HisF family.

The protein localises to the cytoplasm. The enzyme catalyses 1-(5-phospho-beta-D-ribosyl)-5-[(5-phospho-beta-D-ribosylamino)methylideneamino]imidazole-4-carboxamide = 5-[(5-phospho-1-deoxy-D-ribulos-1-ylimino)methylamino]-1-(5-phospho-beta-D-ribosyl)imidazole-4-carboxamide. Its pathway is amino-acid biosynthesis; L-histidine biosynthesis; L-histidine from 5-phospho-alpha-D-ribose 1-diphosphate: step 4/9. This Thermobifida fusca (strain YX) protein is 1-(5-phosphoribosyl)-5-[(5-phosphoribosylamino)methylideneamino] imidazole-4-carboxamide isomerase.